The primary structure comprises 231 residues: Ribose-5-phosphate isomerase A (231 aa).

Substrate is bound by residues 32 to 35 (TGST), 85 to 88 (DGAD), and 98 to 101 (KGGG). Residue Glu-107 is the Proton acceptor of the active site. Lys-125 provides a ligand contact to substrate.

This sequence belongs to the ribose 5-phosphate isomerase family. In terms of assembly, homodimer.

The catalysed reaction is aldehydo-D-ribose 5-phosphate = D-ribulose 5-phosphate. It participates in carbohydrate degradation; pentose phosphate pathway; D-ribose 5-phosphate from D-ribulose 5-phosphate (non-oxidative stage): step 1/1. Functionally, catalyzes the reversible conversion of ribose-5-phosphate to ribulose 5-phosphate. The sequence is that of Ribose-5-phosphate isomerase A from Paraburkholderia phytofirmans (strain DSM 17436 / LMG 22146 / PsJN) (Burkholderia phytofirmans).